A 424-amino-acid chain; its full sequence is Serine--tRNA ligase (424 aa).

Position 229-231 (229-231 (TAE)) interacts with L-serine. ATP is bound at residue 260 to 262 (RRE). Residue Glu283 coordinates L-serine. 347–350 (EVSS) lines the ATP pocket. L-serine is bound at residue Ser383.

Belongs to the class-II aminoacyl-tRNA synthetase family. Type-1 seryl-tRNA synthetase subfamily. Homodimer. The tRNA molecule binds across the dimer.

It is found in the cytoplasm. It catalyses the reaction tRNA(Ser) + L-serine + ATP = L-seryl-tRNA(Ser) + AMP + diphosphate + H(+). The enzyme catalyses tRNA(Sec) + L-serine + ATP = L-seryl-tRNA(Sec) + AMP + diphosphate + H(+). The protein operates within aminoacyl-tRNA biosynthesis; selenocysteinyl-tRNA(Sec) biosynthesis; L-seryl-tRNA(Sec) from L-serine and tRNA(Sec): step 1/1. In terms of biological role, catalyzes the attachment of serine to tRNA(Ser). Is also able to aminoacylate tRNA(Sec) with serine, to form the misacylated tRNA L-seryl-tRNA(Sec), which will be further converted into selenocysteinyl-tRNA(Sec). This Roseiflexus sp. (strain RS-1) protein is Serine--tRNA ligase.